Here is a 548-residue protein sequence, read N- to C-terminus: Probable inorganic phosphate transporter 1-5 (548 aa).

Over 1 to 23 the chain is Cytoplasmic; that stretch reads MVQDRKVLDALDTAKTQWYHFTA. Residues 24–44 form a helical membrane-spanning segment; the sequence is VVIAGMGFFTDAYDLFSISLV. Residues 45 to 69 are Extracellular-facing; sequence TKLLGRIYYFNPASKSPGSLPPNVS. The chain crosses the membrane as a helical span at residues 70-90; it reads AAVNGVAFCGTLAGQLFFGWL. Residues 91–98 are Cytoplasmic-facing; it reads GDKMGRKK. A helical transmembrane segment spans residues 99–119; the sequence is VYGMTLMLMVICCLASGLSFG. The Extracellular portion of the chain corresponds to 120–123; that stretch reads SSAK. Residues 124–144 form a helical membrane-spanning segment; sequence GVMATLCFFRFWLGFGIGGDY. At 145–163 the chain is on the cytoplasmic side; sequence PLSATIMSEYANKRTRGAF. The helical transmembrane segment at 164 to 184 threads the bilayer; that stretch reads IAAVFAMQGFGNLTGGIVAII. Residues 185-210 lie on the Extracellular side of the membrane; the sequence is VSAAFKLRFDAPAYRDDRAGSTVPQA. The chain crosses the membrane as a helical span at residues 211 to 231; that stretch reads DYAWRIVLMFGAIPALLTYYW. The Cytoplasmic segment spans residues 232–303; that stretch reads RMKMPETARY…REFARRHGHH (72 aa). Residues 304–324 traverse the membrane as a helical segment; it reads LLGTTVCWFVLDIAYYSQNLF. The Extracellular segment spans residues 325–355; it reads QKDIYTAVQWLPKADTMSALEEMFKISRAQT. A helical membrane pass occupies residues 356 to 376; that stretch reads LVALCGTIPGYWFTVLFIDIV. Over 377-378 the chain is Cytoplasmic; sequence GR. A helical transmembrane segment spans residues 379–399; that stretch reads FAIQLGGFFLMTAFMLGLAVP. The Extracellular portion of the chain corresponds to 400–405; sequence YHHWTT. A helical membrane pass occupies residues 406–426; that stretch reads PGNHVGFVVMYAFTFFFANFG. At 427–449 the chain is on the cytoplasmic side; the sequence is PNSTTFIVPAEIFPARLRSTCHG. A helical transmembrane segment spans residues 450-470; that stretch reads ISSAAGKMGAIVGSFGFLYAA. Over 471-490 the chain is Extracellular; that stretch reads QSTDPSKTDAGYPRGIGVRN. A helical membrane pass occupies residues 491–511; sequence SLFLLAGCNVVGFLFTFLVPE. The Cytoplasmic segment spans residues 512-548; sequence SKGKSLEELSGENEMEAEPAAATNSYRQTVPDSGQSE. The tract at residues 518 to 548 is disordered; the sequence is EELSGENEMEAEPAAATNSYRQTVPDSGQSE. Over residues 533–548 the composition is skewed to polar residues; sequence ATNSYRQTVPDSGQSE.

It belongs to the major facilitator superfamily. Phosphate:H(+) symporter (TC 2.A.1.9) family. In terms of tissue distribution, expressed at low levels in roots.

The protein resides in the membrane. High-affinity transporter for external inorganic phosphate. The protein is Probable inorganic phosphate transporter 1-5 (PHT1-5) of Oryza sativa subsp. japonica (Rice).